A 127-amino-acid polypeptide reads, in one-letter code: Small ribosomal subunit protein uS11 (127 aa).

This sequence belongs to the universal ribosomal protein uS11 family. As to quaternary structure, part of the 30S ribosomal subunit. Interacts with proteins S7 and S18. Binds to IF-3.

Functionally, located on the platform of the 30S subunit, it bridges several disparate RNA helices of the 16S rRNA. Forms part of the Shine-Dalgarno cleft in the 70S ribosome. The protein is Small ribosomal subunit protein uS11 of Streptococcus pyogenes serotype M1.